Reading from the N-terminus, the 144-residue chain is Ribosome association toxin RatA (144 aa).

This sequence belongs to the ribosome association toxin RatA family.

Functionally, toxic component of a type II toxin-antitoxin (TA) system. Binds to 50S ribosomal subunits, preventing them from associating with 30S subunits to form 70S ribosomes. Its antitoxin is unknown. The polypeptide is Ribosome association toxin RatA (ratA) (Pseudomonas aeruginosa (strain ATCC 15692 / DSM 22644 / CIP 104116 / JCM 14847 / LMG 12228 / 1C / PRS 101 / PAO1)).